Reading from the N-terminus, the 316-residue chain is Thiamine-monophosphate kinase (316 aa).

Asp-26, Thr-49, and Asp-50 together coordinate Mg(2+). Asp-57 is a substrate binding site. Residue Asp-79 participates in Mg(2+) binding. Residues Tyr-109, 126-127, and Arg-151 each bind ATP; that span reads GD. Asp-127 lines the Mg(2+) pocket. Asp-198 contacts Mg(2+). ATP is bound at residue Ser-200. Asp-201 provides a ligand contact to Mg(2+). Residues Glu-251 and Phe-305 each coordinate substrate.

It belongs to the thiamine-monophosphate kinase family.

It carries out the reaction thiamine phosphate + ATP = thiamine diphosphate + ADP. The protein operates within cofactor biosynthesis; thiamine diphosphate biosynthesis; thiamine diphosphate from thiamine phosphate: step 1/1. In terms of biological role, catalyzes the ATP-dependent phosphorylation of thiamine-monophosphate (TMP) to form thiamine-pyrophosphate (TPP), the active form of vitamin B1. The sequence is that of Thiamine-monophosphate kinase from Rhodopirellula baltica (strain DSM 10527 / NCIMB 13988 / SH1).